A 23-amino-acid chain; its full sequence is Conotoxin Cl6c (23 aa).

Cystine bridges form between Cys2/Cys12, Cys5/Cys17, and Cys11/Cys21.

Expressed by the venom duct.

It is found in the secreted. In Californiconus californicus (California cone), this protein is Conotoxin Cl6c.